The sequence spans 69 residues: DNA-directed RNA polymerase subunit epsilon (69 aa).

It belongs to the RNA polymerase subunit epsilon family. As to quaternary structure, RNAP is composed of a core of 2 alpha, a beta and a beta' subunit. The core is associated with a delta subunit, and at least one of epsilon or omega. When a sigma factor is associated with the core the holoenzyme is formed, which can initiate transcription.

It carries out the reaction RNA(n) + a ribonucleoside 5'-triphosphate = RNA(n+1) + diphosphate. A non-essential component of RNA polymerase (RNAP). The polypeptide is DNA-directed RNA polymerase subunit epsilon (Bacillus pumilus (strain SAFR-032)).